The sequence spans 132 residues: D-ribose pyranase (132 aa).

Catalysis depends on H20, which acts as the Proton donor. Residues D28, H99, and 121 to 123 (YSN) contribute to the substrate site.

It belongs to the RbsD / FucU family. RbsD subfamily. Homodecamer.

It localises to the cytoplasm. It catalyses the reaction beta-D-ribopyranose = beta-D-ribofuranose. It participates in carbohydrate metabolism; D-ribose degradation; D-ribose 5-phosphate from beta-D-ribopyranose: step 1/2. In terms of biological role, catalyzes the interconversion of beta-pyran and beta-furan forms of D-ribose. This chain is D-ribose pyranase, found in Pseudomonas putida (strain ATCC 47054 / DSM 6125 / CFBP 8728 / NCIMB 11950 / KT2440).